A 311-amino-acid chain; its full sequence is Probable manganese-dependent inorganic pyrophosphatase (311 aa).

Residues histidine 9, aspartate 13, aspartate 15, aspartate 75, histidine 97, and aspartate 149 each contribute to the Mn(2+) site.

It belongs to the PPase class C family. Requires Mn(2+) as cofactor.

The protein resides in the cytoplasm. It carries out the reaction diphosphate + H2O = 2 phosphate + H(+). The chain is Probable manganese-dependent inorganic pyrophosphatase from Lactobacillus helveticus (strain DPC 4571).